We begin with the raw amino-acid sequence, 231 residues long: Large ribosomal subunit protein uL1 (231 aa).

This sequence belongs to the universal ribosomal protein uL1 family. Part of the 50S ribosomal subunit.

Binds directly to 23S rRNA. The L1 stalk is quite mobile in the ribosome, and is involved in E site tRNA release. Its function is as follows. Protein L1 is also a translational repressor protein, it controls the translation of the L11 operon by binding to its mRNA. In Nitrosomonas eutropha (strain DSM 101675 / C91 / Nm57), this protein is Large ribosomal subunit protein uL1.